The sequence spans 276 residues: Microtubule-associated protein RP/EB family member 1A (276 aa).

One can recognise a Calponin-homology (CH) domain in the interval 13–115; that stretch reads FVGRNEILTW…FLQWLKRFCD (103 aa). Positions 124-172 are disordered; sequence ENYNPVERRSRNGKERSVKGSNKIPKSLQTNNNHPPPNSSSVGLSKASG. Residues 129–141 are compositionally biased toward basic and acidic residues; it reads VERRSRNGKERSV. Over residues 162-172 the composition is skewed to low complexity; it reads SSSVGLSKASG. An EB1 C-terminal domain is found at 173–243; sequence PKSAKAAEVQ…LYATDANESA (71 aa). The tract at residues 252–276 is disordered; that stretch reads NQSLGVEDDEAEGNGEQLEEEKTQA. The segment covering 257–270 has biased composition (acidic residues); the sequence is VEDDEAEGNGEQLE.

This sequence belongs to the MAPRE family. As to quaternary structure, homodimer and heterodimer with EB1B. Interacts with tobamovirus movement protein. Highly expressed in guard cells of leaf stomata, pollen grains and pollen tubes. Expressed in young roots.

Its subcellular location is the cytoplasm. The protein resides in the cytoskeleton. It localises to the spindle pole. It is found in the phragmoplast. In terms of biological role, binds to the plus end of microtubules and regulates the dynamics of the microtubule cytoskeleton. May be involved in anchoring microtubules to their nucleation sites and/or functioning as a reservoir for distribution to the growing end. In plants, microtubule minus ends are not necessarily severed from the nucleation site and transported to the plus end of a microtubule as part of the recycling process. May play a role in endomembrane organization during polarized growth of plant cells. Interacts with the tobamovirus movement protein (MP) and may play a role in the association of MP with the microtubule system during infection. This Arabidopsis thaliana (Mouse-ear cress) protein is Microtubule-associated protein RP/EB family member 1A (EB1A).